The primary structure comprises 63 residues: Large ribosomal subunit protein uL30 (63 aa).

The protein belongs to the universal ribosomal protein uL30 family. Part of the 50S ribosomal subunit.

The protein is Large ribosomal subunit protein uL30 of Rickettsia massiliae (strain Mtu5).